A 276-amino-acid chain; its full sequence is Thiazole synthase (276 aa).

Residue Lys-117 is the Schiff-base intermediate with DXP of the active site. 1-deoxy-D-xylulose 5-phosphate is bound by residues Gly-178, 204–205, and 226–227; these read AG and NT.

It belongs to the ThiG family. Homotetramer. Forms heterodimers with either ThiH or ThiS.

The protein localises to the plastid. It localises to the chloroplast. The catalysed reaction is [ThiS sulfur-carrier protein]-C-terminal-Gly-aminoethanethioate + 2-iminoacetate + 1-deoxy-D-xylulose 5-phosphate = [ThiS sulfur-carrier protein]-C-terminal Gly-Gly + 2-[(2R,5Z)-2-carboxy-4-methylthiazol-5(2H)-ylidene]ethyl phosphate + 2 H2O + H(+). It participates in cofactor biosynthesis; thiamine diphosphate biosynthesis. Its function is as follows. Catalyzes the rearrangement of 1-deoxy-D-xylulose 5-phosphate (DXP) to produce the thiazole phosphate moiety of thiamine. Sulfur is provided by the thiocarboxylate moiety of the carrier protein ThiS. In vitro, sulfur can be provided by H(2)S. In Gracilaria tenuistipitata var. liui (Red alga), this protein is Thiazole synthase.